Consider the following 264-residue polypeptide: tRNA (guanine-N(1)-)-methyltransferase (264 aa).

S-adenosyl-L-methionine is bound by residues Gly116 and Val136–Leu141.

The protein belongs to the RNA methyltransferase TrmD family. Homodimer.

Its subcellular location is the cytoplasm. It catalyses the reaction guanosine(37) in tRNA + S-adenosyl-L-methionine = N(1)-methylguanosine(37) in tRNA + S-adenosyl-L-homocysteine + H(+). In terms of biological role, specifically methylates guanosine-37 in various tRNAs. This is tRNA (guanine-N(1)-)-methyltransferase from Koribacter versatilis (strain Ellin345).